Consider the following 93-residue polypeptide: MMPNIICLKAVISGKVQGVGYRYSTRAKAQSLGLVGWVRNLPDGRVEAMAEGERTQVDKLIEWFKQGPPAAEVSKVDVDEESLGEFRAFEILR.

Residues Cys7–Arg93 form the Acylphosphatase-like domain. Active-site residues include Arg22 and Asn40.

Belongs to the acylphosphatase family.

The catalysed reaction is an acyl phosphate + H2O = a carboxylate + phosphate + H(+). The polypeptide is Acylphosphatase (acyP) (Acaryochloris marina (strain MBIC 11017)).